Consider the following 187-residue polypeptide: MISSNDFRTGTTIELDGAVWRVIEFLHVKPGKGSAFVRTKLKAVVSGSVVEKTFRAGEMVPQALLEKSKLQHTYMDGDEFVFMDMTSYEETRLTAKQIGESRKYLKEGMEVNVVSWNEKPLEVELPNSVVLEIKETDPGVKGDTASGGTKPAILETGAQVMVPLFISIGEKIRVDTRNDSYLGRETQ.

This sequence belongs to the elongation factor P family.

The protein resides in the cytoplasm. It functions in the pathway protein biosynthesis; polypeptide chain elongation. Its function is as follows. Involved in peptide bond synthesis. Stimulates efficient translation and peptide-bond synthesis on native or reconstituted 70S ribosomes in vitro. Probably functions indirectly by altering the affinity of the ribosome for aminoacyl-tRNA, thus increasing their reactivity as acceptors for peptidyl transferase. In Prochlorococcus marinus (strain NATL1A), this protein is Elongation factor P.